The sequence spans 453 residues: RuvB-like helicase 1 (453 aa).

An ATP-binding site is contributed by 71 to 78; it reads GGPGTGKT.

This sequence belongs to the RuvB family. May form heterododecamers with RVB2. Component of the SWR1 chromatin remodeling complex, the INO80 chromatin remodeling complex, and of the R2TP complex.

It localises to the nucleus. It carries out the reaction ATP + H2O = ADP + phosphate + H(+). In terms of biological role, DNA helicase which participates in several chromatin remodeling complexes, including the SWR1 and the INO80 complexes. The SWR1 complex mediates the ATP-dependent exchange of histone H2A for the H2A variant HZT1 leading to transcriptional regulation of selected genes by chromatin remodeling. The INO80 complex remodels chromatin by shifting nucleosomes and is involved in DNA repair. Also involved in pre-rRNA processing. The polypeptide is RuvB-like helicase 1 (RVB1) (Yarrowia lipolytica (strain CLIB 122 / E 150) (Yeast)).